The following is a 131-amino-acid chain: Fluoride-specific ion channel FluC 2 (131 aa).

4 consecutive transmembrane segments (helical) span residues 4–24 (IIQGLLFVALGSVFGGMARFW), 46–66 (VSGAFAIGVFGALAASGHGVF), 71–91 (PWLFAVTGFLGCYTTVSSFAL), and 105–125 (AISNVTFSLVFCLIAVALGFA). Residues Gly-81 and Thr-84 each contribute to the Na(+) site.

This sequence belongs to the fluoride channel Fluc/FEX (TC 1.A.43) family.

Its subcellular location is the cell inner membrane. It carries out the reaction fluoride(in) = fluoride(out). Its activity is regulated as follows. Na(+) is not transported, but it plays an essential structural role and its presence is essential for fluoride channel function. Fluoride-specific ion channel. Important for reducing fluoride concentration in the cell, thus reducing its toxicity. This Rhodopseudomonas palustris (strain BisB18) protein is Fluoride-specific ion channel FluC 2.